The sequence spans 396 residues: Elongation factor Tu (396 aa).

One can recognise a tr-type G domain in the interval 10-206 (KPHCNIGTIG…NVDEYIPQPE (197 aa)). The tract at residues 19-26 (GHVDHGKT) is G1. A GTP-binding site is contributed by 19–26 (GHVDHGKT). Thr26 provides a ligand contact to Mg(2+). The G2 stretch occupies residues 60-64 (GITIS). The segment at 81–84 (DCPG) is G3. Residues 81 to 85 (DCPGH) and 136 to 139 (NKCD) contribute to the GTP site. Positions 136 to 139 (NKCD) are G4. The tract at residues 174-176 (SAL) is G5.

This sequence belongs to the TRAFAC class translation factor GTPase superfamily. Classic translation factor GTPase family. EF-Tu/EF-1A subfamily. As to quaternary structure, monomer.

It localises to the cytoplasm. It carries out the reaction GTP + H2O = GDP + phosphate + H(+). Its function is as follows. GTP hydrolase that promotes the GTP-dependent binding of aminoacyl-tRNA to the A-site of ribosomes during protein biosynthesis. The protein is Elongation factor Tu of Afipia carboxidovorans (strain ATCC 49405 / DSM 1227 / KCTC 32145 / OM5) (Oligotropha carboxidovorans).